The chain runs to 176 residues: Endoribonuclease YbeY (176 aa).

Positions 128, 132, and 138 each coordinate Zn(2+).

Belongs to the endoribonuclease YbeY family. Zn(2+) serves as cofactor.

It is found in the cytoplasm. Functionally, single strand-specific metallo-endoribonuclease involved in late-stage 70S ribosome quality control and in maturation of the 3' terminus of the 16S rRNA. This chain is Endoribonuclease YbeY, found in Zymomonas mobilis subsp. mobilis (strain ATCC 31821 / ZM4 / CP4).